Consider the following 275-residue polypeptide: Large ribosomal subunit protein uL2 (275 aa).

The segment covering 28-38 (RPYEPLVETKS) has biased composition (basic and acidic residues). Disordered stretches follow at residues 28–53 (RPYE…TTRH) and 222–275 (GVAM…RSAK). Positions 254 to 275 (KGHKTRKNKRTDKMIVRRRSAK) are enriched in basic residues.

The protein belongs to the universal ribosomal protein uL2 family. Part of the 50S ribosomal subunit. Forms a bridge to the 30S subunit in the 70S ribosome.

Its function is as follows. One of the primary rRNA binding proteins. Required for association of the 30S and 50S subunits to form the 70S ribosome, for tRNA binding and peptide bond formation. It has been suggested to have peptidyltransferase activity; this is somewhat controversial. Makes several contacts with the 16S rRNA in the 70S ribosome. The polypeptide is Large ribosomal subunit protein uL2 (Marinobacter nauticus (strain ATCC 700491 / DSM 11845 / VT8) (Marinobacter aquaeolei)).